The primary structure comprises 205 residues: GTP cyclohydrolase-2 (205 aa).

49–53 (RLHSE) provides a ligand contact to GTP. 3 residues coordinate Zn(2+): C54, C65, and C67. GTP-binding positions include Q70, 92 to 94 (EGR), and T114. The active-site Proton acceptor is the D126. The active-site Nucleophile is the R128. Residues T149 and K154 each coordinate GTP.

The protein belongs to the GTP cyclohydrolase II family. Requires Zn(2+) as cofactor.

The catalysed reaction is GTP + 4 H2O = 2,5-diamino-6-hydroxy-4-(5-phosphoribosylamino)-pyrimidine + formate + 2 phosphate + 3 H(+). The protein operates within cofactor biosynthesis; riboflavin biosynthesis; 5-amino-6-(D-ribitylamino)uracil from GTP: step 1/4. Its function is as follows. Catalyzes the conversion of GTP to 2,5-diamino-6-ribosylamino-4(3H)-pyrimidinone 5'-phosphate (DARP), formate and pyrophosphate. This Pseudomonas paraeruginosa (strain DSM 24068 / PA7) (Pseudomonas aeruginosa (strain PA7)) protein is GTP cyclohydrolase-2.